The sequence spans 179 residues: Large ribosomal subunit protein uL5 (179 aa).

It belongs to the universal ribosomal protein uL5 family. As to quaternary structure, part of the 50S ribosomal subunit; part of the 5S rRNA/L5/L18/L25 subcomplex. Contacts the 5S rRNA and the P site tRNA. Forms a bridge to the 30S subunit in the 70S ribosome.

Its function is as follows. This is one of the proteins that bind and probably mediate the attachment of the 5S RNA into the large ribosomal subunit, where it forms part of the central protuberance. In the 70S ribosome it contacts protein S13 of the 30S subunit (bridge B1b), connecting the 2 subunits; this bridge is implicated in subunit movement. Contacts the P site tRNA; the 5S rRNA and some of its associated proteins might help stabilize positioning of ribosome-bound tRNAs. This Marinomonas sp. (strain MWYL1) protein is Large ribosomal subunit protein uL5.